The sequence spans 397 residues: Elongation factor Tu (397 aa).

One can recognise a tr-type G domain in the interval Lys-10–Thr-206. The tract at residues Gly-19 to Thr-26 is G1. Gly-19–Thr-26 contacts GTP. Thr-26 contributes to the Mg(2+) binding site. A G2 region spans residues Gly-61–Ser-65. The G3 stretch occupies residues Asp-82 to Gly-85. Residues Asp-82–His-86 and Asn-137–Asp-140 contribute to the GTP site. The tract at residues Asn-137 to Asp-140 is G4. The G5 stretch occupies residues Ser-175–Leu-177.

This sequence belongs to the TRAFAC class translation factor GTPase superfamily. Classic translation factor GTPase family. EF-Tu/EF-1A subfamily. Monomer.

The protein resides in the cytoplasm. It catalyses the reaction GTP + H2O = GDP + phosphate + H(+). In terms of biological role, GTP hydrolase that promotes the GTP-dependent binding of aminoacyl-tRNA to the A-site of ribosomes during protein biosynthesis. This Alkaliphilus oremlandii (strain OhILAs) (Clostridium oremlandii (strain OhILAs)) protein is Elongation factor Tu.